Consider the following 580-residue polypeptide: MAEFRDDQASRLCDNCKKEIPVFNFTIHEIHCQRNIGVCPVCKEPFPKSDMDIHMAAEHCQVTCKCNKKLEKRQLKQHAETECPLRLAVCQHCDLELSVVKLKEHEDYCGARTELCGSCGRNVLVKELKTHPEVCGRVEEEKRTEAAIPPEAYDEPWSQDRIWIASQLLRQIEALDPPMRLPGRPLQAFEADPFYSRTTSQRSMAAQFPVQNNLFEEQERQERNRSRQSPKDSAENNAHLDFMLALSLQNEGQATSMVEQGFWESVPEADPARAGPTSLGDIKGAADEILLPCEFCEELYPEELLIDHQTSCNPSHALRSLNTGSSSIRGVEDPGTIFQNFLQQATSNQFDTLMGLSSSAAVEDSIIIPCEFCGVQLEEEVLFYHQDQCDQRPATANHRAVEGIPAQDSQPENTSAELSRRRVKHQGDLSSGYMDDVKPESVKGPTYSMSPNRTMNNVASCNRLLNLPSGPRSDCQRSPPGVLKLNNSDSQDIRGQMRGSQNGPIASGHAPVIHSIQNLYPENFAPSFPHGSPGRYGAGGRSEGGRSSRVSPAAAGYHSRAAKAKPPKQQGAGDAEEEEE.

An N-acetylalanine modification is found at Ala-2. The TRAF-type zinc finger occupies 27 to 103 (IHEIHCQRNI…DLELSVVKLK (77 aa)). Phosphoserine occurs at positions 278, 320, 326, 327, 409, 415, 430, 450, 469, and 532. Disordered regions lie at residues 395–453 (TANH…SPNR), 468–509 (PSGP…ASGH), and 524–580 (FAPS…EEEE). Residues 407–417 (QDSQPENTSAE) show a composition bias toward polar residues.

Interacts with MAVS, TICAM1, TRAF1, TRAF2, TRAF3 and TRAF6. As to expression, expressed in skeletal muscle, brain, liver, kidney, spleen and bone marrow. Expression depends on STAT1.

Its function is as follows. Negative feedback regulator that controls excessive innate immune responses. Regulates both Toll-like receptor 4 (TLR4) and DDX58/RIG1-like helicases (RLH) pathways. May inhibit the LTR pathway by direct interaction with TRAF6 and attenuation of NF-kappa-B activation. May negatively regulate the RLH pathway downstream from MAVS and upstream of NF-kappa-B and IRF3. This is TRAF-type zinc finger domain-containing protein 1 (Trafd1) from Mus musculus (Mouse).